The primary structure comprises 1820 residues: MQWTAASCDQHDQHDPPAVNRNSIEQRTPANNCEVDPMDATGSTKHPHLPKQREADRPVSGSGGGSSSLTLSGAVTTSMEVTVSTTTTTTIIESSSSTNTTLEKNSPSPAGGSCSSGSGSLSPAYLQHHLQHHGSPLHHLQVHHHTAPPSPLAAVRSAQMGSSVANGAGPAAACLAVCCSPGSSHHHLGHVGHLATGHPLPHQLPHQLPHPSLYPLMAAAQLGYAGSSGPSSLVNSPALGRRKRYTSNSSNCSSQFNNNYAGLDVDSLDDMLRKLTELEQRVIEAEERAEEAEDKVRAMEQRLSEWPKPPPQQAQHPHSHSHPHQPIPSHPQEQQAKNHCSPSHQASGGATAGAAGSGLPPTQETEKTITSLEIQVEEQRQLRLHDARQIEAKAAKIKEWVNNKLRDLEEQNQLLREQNVKCNQQLELLKNHIANQSQRHSIVGPVRNSLSLDVQDFTGSGSNPEHRRRSESLDPQEIIGRPLTSSYPHHQHRRNLSMEPQELERNLVAAVDGLTLAPLSSISNKAPGGVPTESGVVTRPDSSDTDTAHDYAEIYTPSCEKLPAWMKNNPALMASGGNSSTTTTTTSELGVPRPPTPPLHRFPSWEAKIYQVANDGLAGAGTGTSTAESTASQEPDIQDGMGTNLSNGRRHGHGHGSGTGIGTGDGHGTLGSTPGTPLPPSRQQQTASGGFCDISVPVYATVKGRASQIRSMPFTGDSSDDSSDGEDHAVMLTHHSHNSSSTDNTETSTSGSASSPSKSLKTSSSLSPAKRSGSESPKNAKARVHIQSRTSTTPSSRINQHLQPSQHQHHTLSNQNHGHQLGAYTVTPSSGQLSLPRYHANALQPGSLPSPLQHMRGTVISDLSFESGLSDDYALPPDAVSESTCMDASMPSLLMRQSYVDSPSKKIESLEKMGHLAKLGGKLKTWRKRWFVLKNGSLNYWKSQHDVQRKPQGQIQLDEVCRINRAEGASTFEIDTGKKVYYLTADSHATMDDWIRVLQNVQRRNATKLLLSRDDQKPTVQGWVTKVKNGHPKKCWCVLLGKMFLYFKAPAETNPLGQINMRDARVEEVEHVSDSDSEEREDAAQDQARLTVAIYPAHQGPTYLILSGKPERDNWLYHLTVVSGGGPSAGTQYEQLVQKLMETDGDPNCVLWRHPILLHTKDTITAPLSSMHTETMQPEAIKLFKSIQLFMSVAVNQPGIDYHVVLAQNALQHALDMPELQTEMICILIKQTSRHLGQKLSVGVQVNKKLGKQTRQLLLCATQSLFTCDTQQAGHAQANGSSPTSIQAPSATPIIDCKSNPPVYSFVQGWQLLALAVSLFVPRSSRLLWYLKLHLSRNADTKTETGKYAAYCERALERTLKNGGRETKPSRMEVLSILLKNPYHHSLPHAIPVHMMNSTYQVVSFDGSTTIEEFQATLAHELGTRDATNGFCLFSDDPIEKDLEHYLEPLAKLCDVISKWETALREKGSGKFENSRVIQLSYKNRLYWKHTIKCETDKERLLLCYQTNSQIVQGRFPLSRELALELASLMSQIDMGDYSLEKSRDVGVGLKGLDKFYPYRYRDALGAEQLKDVQELLVSKWMLLKGRSTLDCVRIYLTCCRKWPYFGACLFQAKPRQSPESNTASGATPVAWLAVAEDALNVLELSTMAPVARYPYSSVMTFGGCQDDFMLVVSHDDGGGGEQKLLFAMSKPKILEITLLIADYMNALGHTVPGTPQMNSLTRNGSHRSLRTSQRPNLGGGSAVATGFSTNATTTAHNTLNSHATHTLNSNHSHTLSSSHHAGGGSQPGTLSSGHHQHHHIQQHHQPDILKSTPDHQRIK.

Disordered regions lie at residues 1 to 73 (MQWT…TLSG), 86 to 158 (TTTT…VRSA), 226 to 260 (GSSGPSSLVNSPALGRRKRYTSNSSNCSSQFNNNY), 286 to 366 (EERA…QETE), 453 to 497 (DVQD…RNLS), 519 to 548 (LSSISNKAPGGVPTESGVVTRPDSSDTDTA), 577 to 597 (GNSSTTTTTTSELGVPRPPTP), 619 to 689 (GAGT…TASG), and 735 to 830 (HSHN…TPSS). The span at 20–31 (NRNSIEQRTPAN) shows a compositional bias: polar residues. Over residues 86-128 (TTTTTIIESSSSTNTTLEKNSPSPAGGSCSSGSGSLSPAYLQH) the composition is skewed to low complexity. Over residues 129–146 (HLQHHGSPLHHLQVHHHT) the composition is skewed to basic residues. Low complexity predominate over residues 247–259 (SNSSNCSSQFNNN). Residues 265–308 (VDSLDDMLRKLTELEQRVIEAEERAEEAEDKVRAMEQRLSEWPK) adopt a coiled-coil conformation. Positions 294 to 305 (DKVRAMEQRLSE) are enriched in basic and acidic residues. Residues 346-358 (ASGGATAGAAGSG) are compositionally biased toward low complexity. A coiled-coil region spans residues 362-438 (TQETEKTITS…LKNHIANQSQ (77 aa)). Over residues 453-463 (DVQDFTGSGSN) the composition is skewed to polar residues. A phosphoserine mark is found at Ser-542 and Ser-543. Residues 623–632 (GTSTAESTAS) show a composition bias toward low complexity. A compositionally biased stretch (gly residues) spans 655–669 (HGSGTGIGTGDGHGT). Low complexity predominate over residues 738-769 (NSSSTDNTETSTSGSASSPSKSLKTSSSLSPA). Polar residues predominate over residues 787–818 (QSRTSTTPSSRINQHLQPSQHQHHTLSNQNHG). PH domains are found at residues 909–1003 (SLEK…NVQR) and 1017–1124 (KPTV…VVSG). Residues Ser-1073, Ser-1075, and Ser-1077 each carry the phosphoserine modification. The MyTH4 domain maps to 1159–1378 (HTKDTITAPL…PSRMEVLSIL (220 aa)). The 324-residue stretch at 1389 to 1712 (HAIPVHMMNS…DYMNALGHTV (324 aa)) folds into the FERM domain. Disordered regions lie at residues 1713 to 1748 (PGTPQMNSLTRNGSHRSLRTSQRPNLGGGSAVATGF) and 1764 to 1820 (ATHT…QRIK). A compositionally biased stretch (polar residues) spans 1714 to 1724 (GTPQMNSLTRN). A compositionally biased stretch (low complexity) spans 1764–1781 (ATHTLNSNHSHTLSSSHH). Over residues 1805–1820 (HQPDILKSTPDHQRIK) the composition is skewed to basic and acidic residues.

This is an uncharacterized protein from Drosophila melanogaster (Fruit fly).